Reading from the N-terminus, the 954-residue chain is Glycine dehydrogenase (decarboxylating) (954 aa).

A compositionally biased stretch (polar residues) spans 1–13 (MTELLQSLSTQNE). The disordered stretch occupies residues 1 to 24 (MTELLQSLSTQNEFVARHNGPNKS). Lys-704 is modified (N6-(pyridoxal phosphate)lysine).

The protein belongs to the GcvP family. In terms of assembly, the glycine cleavage system is composed of four proteins: P, T, L and H. The cofactor is pyridoxal 5'-phosphate.

It carries out the reaction N(6)-[(R)-lipoyl]-L-lysyl-[glycine-cleavage complex H protein] + glycine + H(+) = N(6)-[(R)-S(8)-aminomethyldihydrolipoyl]-L-lysyl-[glycine-cleavage complex H protein] + CO2. Functionally, the glycine cleavage system catalyzes the degradation of glycine. The P protein binds the alpha-amino group of glycine through its pyridoxal phosphate cofactor; CO(2) is released and the remaining methylamine moiety is then transferred to the lipoamide cofactor of the H protein. The protein is Glycine dehydrogenase (decarboxylating) of Vibrio campbellii (strain ATCC BAA-1116).